Reading from the N-terminus, the 397-residue chain is Serpin B10 (397 aa).

A Nuclear localization signal motif is present at residues K74–K77.

This sequence belongs to the serpin family. Ov-serpin subfamily.

The protein resides in the nucleus. It localises to the cytoplasm. Its function is as follows. Protease inhibitor that may play a role in the regulation of protease activities during hematopoiesis and apoptosis induced by TNF. May regulate protease activities in the cytoplasm and in the nucleus. This is Serpin B10 (SERPINB10) from Otolemur garnettii (Small-eared galago).